Here is a 59-residue protein sequence, read N- to C-terminus: MPAFFSLPAERRLQAWPQSEAPLSVSSCFQNRPPEPASFQNLRPEPASLQNLRTEPTSF.

A disordered region spans residues 27 to 59 (SCFQNRPPEPASFQNLRPEPASLQNLRTEPTSF). The segment covering 48–59 (SLQNLRTEPTSF) has biased composition (polar residues).

This is an uncharacterized protein from Homo sapiens (Human).